The following is a 158-amino-acid chain: Large ribosomal subunit protein uL11 (158 aa).

Belongs to the universal ribosomal protein uL11 family. As to quaternary structure, part of the ribosomal stalk of the 50S ribosomal subunit. Interacts with L10 and the large rRNA to form the base of the stalk. L10 forms an elongated spine to which L12 dimers bind in a sequential fashion forming a multimeric L10(L12)X complex.

Functionally, forms part of the ribosomal stalk which helps the ribosome interact with GTP-bound translation factors. In Methanosphaerula palustris (strain ATCC BAA-1556 / DSM 19958 / E1-9c), this protein is Large ribosomal subunit protein uL11.